A 189-amino-acid chain; its full sequence is MGNKVVTFTEQELDDYQDCTFFTRKEILRVHKRFRELRPDLVPRQMTEGQASSVKVPCECIEKMPELRENPFRRRICEAFSRDGQGNLSFEDFLDALSVFSEQAPRDIKVFYAFKIYDFDQDGFIGHADLMSCLTTMTKNELSPEEHQQIADKVIEEADVDGDGKLSILEFEHVILRAPDFLSTFHIRI.

3 EF-hand domains span residues 68 to 103 (RENP…FSEQ), 105 to 140 (PRDI…MTKN), and 146 to 181 (EHQQ…APDF). Ca(2+) contacts are provided by D118, D120, D122, D129, D159, D161, D163, K165, and E170.

In terms of assembly, monomer. Homodimer.

The protein resides in the cytoplasm. In terms of biological role, calcium- and integrin-binding protein. Plays a role in intracellular calcium homeostasis. Critical for proper photoreceptor cell maintenance and function. Required for prevention of light-dependent retinal degeneration. The chain is Calcium and integrin-binding family member 2 from Drosophila melanogaster (Fruit fly).